A 252-amino-acid chain; its full sequence is Phosphoribosylformylglycinamidine synthase subunit PurQ (252 aa).

A Glutamine amidotransferase type-1 domain is found at 6 to 237 (VGVVVFPGSN…FAHLAGTKRS (232 aa)). C89 serves as the catalytic Nucleophile. Catalysis depends on residues H206 and E208.

As to quaternary structure, part of the FGAM synthase complex composed of 1 PurL, 1 PurQ and 2 PurS subunits.

It localises to the cytoplasm. The enzyme catalyses N(2)-formyl-N(1)-(5-phospho-beta-D-ribosyl)glycinamide + L-glutamine + ATP + H2O = 2-formamido-N(1)-(5-O-phospho-beta-D-ribosyl)acetamidine + L-glutamate + ADP + phosphate + H(+). It catalyses the reaction L-glutamine + H2O = L-glutamate + NH4(+). It functions in the pathway purine metabolism; IMP biosynthesis via de novo pathway; 5-amino-1-(5-phospho-D-ribosyl)imidazole from N(2)-formyl-N(1)-(5-phospho-D-ribosyl)glycinamide: step 1/2. In terms of biological role, part of the phosphoribosylformylglycinamidine synthase complex involved in the purines biosynthetic pathway. Catalyzes the ATP-dependent conversion of formylglycinamide ribonucleotide (FGAR) and glutamine to yield formylglycinamidine ribonucleotide (FGAM) and glutamate. The FGAM synthase complex is composed of three subunits. PurQ produces an ammonia molecule by converting glutamine to glutamate. PurL transfers the ammonia molecule to FGAR to form FGAM in an ATP-dependent manner. PurS interacts with PurQ and PurL and is thought to assist in the transfer of the ammonia molecule from PurQ to PurL. This chain is Phosphoribosylformylglycinamidine synthase subunit PurQ, found in Chlorobaculum parvum (strain DSM 263 / NCIMB 8327) (Chlorobium vibrioforme subsp. thiosulfatophilum).